Here is a 1004-residue protein sequence, read N- to C-terminus: Bifunctional glutamine synthetase adenylyltransferase/adenylyl-removing enzyme (1004 aa).

Residues 1-497 (MCCTTVVVVR…LHAKLFYQPL (497 aa)) are adenylyl removase. The adenylyl transferase stretch occupies residues 502–1004 (GPASLEIRHG…KTFVRKVFGS (503 aa)).

Belongs to the GlnE family. It depends on Mg(2+) as a cofactor.

The enzyme catalyses [glutamine synthetase]-O(4)-(5'-adenylyl)-L-tyrosine + phosphate = [glutamine synthetase]-L-tyrosine + ADP. It carries out the reaction [glutamine synthetase]-L-tyrosine + ATP = [glutamine synthetase]-O(4)-(5'-adenylyl)-L-tyrosine + diphosphate. Functionally, involved in the regulation of glutamine synthetase GlnA, a key enzyme in the process to assimilate ammonia. When cellular nitrogen levels are high, the C-terminal adenylyl transferase (AT) inactivates GlnA by covalent transfer of an adenylyl group from ATP to specific tyrosine residue of GlnA, thus reducing its activity. Conversely, when nitrogen levels are low, the N-terminal adenylyl removase (AR) activates GlnA by removing the adenylyl group by phosphorolysis, increasing its activity. The regulatory region of GlnE binds the signal transduction protein PII (GlnB) which indicates the nitrogen status of the cell. The protein is Bifunctional glutamine synthetase adenylyltransferase/adenylyl-removing enzyme of Mycobacterium leprae (strain TN).